The sequence spans 189 residues: Probable nicotinate-nucleotide adenylyltransferase (189 aa).

The protein belongs to the NadD family.

The enzyme catalyses nicotinate beta-D-ribonucleotide + ATP + H(+) = deamido-NAD(+) + diphosphate. It participates in cofactor biosynthesis; NAD(+) biosynthesis; deamido-NAD(+) from nicotinate D-ribonucleotide: step 1/1. Its function is as follows. Catalyzes the reversible adenylation of nicotinate mononucleotide (NaMN) to nicotinic acid adenine dinucleotide (NaAD). The polypeptide is Probable nicotinate-nucleotide adenylyltransferase (Staphylococcus aureus (strain USA300 / TCH1516)).